Consider the following 1125-residue polypeptide: MPRAPRCPAVRSLLRSRYREVWPLATFVRRLGLEGSRLVQPGDPKVFRTLVAQCLVCVPWGSQPPPADLSFHQVSSLKELVSRVVQKLCERGERNVLAFGFALLNGARGGPPMAFTTSVHSYLPNSVTESLCVSGAWMLLLSRVGDDLLVYLLSHCALYLLVPPSCAYQVCGSPLYQICATTDTWSSVPAGYRPTRPVGGNFTNLGSAHQIKNSGHQEAPKPQALPSRGTKRLLSLTSTNVPSAKKARFEPALRVDKGPHRQVVPTPSGKTWAPSPAASPKVPPAAKNLSLKGKASDPSLSGSVCCKHKPSSSSLLSSPPQDAEKLRPFTETRHFLYSRGGGQEELNPSFLLNSLPPSLTGARRLVEIIFLGSRPRTSGPFCRTRRLPRRYWQMRPLFQQLLMNHAKCQYVRFLRSHCRFRTANQRVPDAMDTSPSHLTSLLRLHSSPWQVYGFLRACLRELVPAGLWGTRHNERRFLKNVKKFISLGKYAKLSLQELMWRVKVEDCHWLRSSPEKDTVPAAEHRLRERILAMFLFWLMDTYVVQLLRSFFYITETTFQKNRLFFYRKSVWSKLQSIGIRQQLERVQLRELSQEEVKHHQDTWLAMPICRLRFIPKLNGLRPIVNMSYGMDTRAFGKKKQTQCFTQSLKTLFSVLNYERTKHPNLMGASVLGTSDSYRIWRTFVLRVRALDQTPRMYFVKADVTGAYDAIPQDKLVEIVANIIRRSESMYCIRQYAVVQKDSQGQVHKSFRRQVSTLSDLQPYMGQFTKHLQDSDASALRNSVVIEQSISMNETGSSLLHFFLRFVRHSVVKIDGRFYVQCQGIPQGSSLSTLLCSLCFGDMENKLFAEVQQDGLLLRFVDDFLLVTPHLAHAKAFLSTLVHGVPEYGCMINLQKTVVNFPVETGALGGAAPHQLPAHCLFPWCGLLLDTRTLEVFCDYSGYGRTSIKMSLTFQGVSRAGKTMRYKLLSVLRLKCHGLFLDLQVNSLQTVCINIYKIFLLQAYRFHACVIRLPFGQHVRKNHAFFLGIISNLASCCYAILKVKNPGVSLRAKGAPGSFPPEATRWLCYQAFLLKLAAHSVTYKCLLGPLRTAQKQLCRKLPEATMTLLKTAADPALSTDFQTILD.

The RNA-interacting domain 1 stretch occupies residues 1–239 (MPRAPRCPAV…TKRLLSLTST (239 aa)). The tract at residues 58–205 (VPWGSQPPPA…RPVGGNFTNL (148 aa)) is GQ motif. A required for regulating specificity for telomeric DNA and for processivity for primer elongation region spans residues 137-141 (WMLLL). A compositionally biased stretch (polar residues) spans 206 to 216 (GSAHQIKNSGH). The interval 206–304 (GSAHQIKNSG…ASDPSLSGSV (99 aa)) is disordered. Positions 240-328 (NVPSAKKARF…PPQDAEKLRP (89 aa)) are linker. A compositionally biased stretch (basic and acidic residues) spans 247-259 (ARFEPALRVDKGP). Residues 273–287 (APSPAASPKVPPAAK) are compositionally biased toward low complexity. A required for oligomerization region spans residues 306–528 (CKHKPSSSSL…VPAAEHRLRE (223 aa)). Positions 329-540 (FTETRHFLYS…LAMFLFWLMD (212 aa)) are RNA-interacting domain 2. Positions 332–337 (TRHFLY) match the TFLY; involved in RNA binding motif. The segment at 381 to 511 (FCRTRRLPRR…VKVEDCHWLR (131 aa)) is QFP motif. The segment at 402–422 (LMNHAKCQYVRFLRSHCRFRT) is CP motif. The residue at position 447 (Ser447) is a Phosphoserine; by DYRK2. The Reverse transcriptase domain maps to 595–928 (EVKHHQDTWL…CLFPWCGLLL (334 aa)). Phosphotyrosine; by SRC-type Tyr-kinases is present on Tyr697. 3 residues coordinate Mg(2+): Asp702, Asp861, and Asp862. Residues 907–921 (LGGAAPHQLPAHCLF) form a required for oligomerization region. The segment at 923 to 927 (WCGLL) is primer grip sequence. Residues 929–1125 (DTRTLEVFCD…LSTDFQTILD (197 aa)) are CTE.

This sequence belongs to the reverse transcriptase family. Telomerase subfamily. Catalytic component of the telomerase holoenzyme complex composed of one molecule of TERT, one molecule of WRAP53/TCAB1, two molecules of H/ACA ribonucleoprotein complex subunits DKC1, NOP10, NHP2 and GAR1, and a telomerase RNA template component (TERC). The telomerase holoenzyme complex is associated with TEP1, SMG6/EST1A and POT1. The molecular chaperone HSP90/P23 complex is required for correct assembly and stabilization of the active telomerase. Interacts directly with HSP90A and PTGES3. Interacts with HSPA1A; the interaction occurs in the absence of TERC and dissociates once the complex has formed. Interacts with RAN; the interaction promotes nuclear export of TERT. Interacts with XPO1. Interacts with PTPN11; the interaction retains TERT in the nucleus. Interacts with NCL (via RRM1 and C-terminal RRM4/Arg/Gly-rich domains); the interaction is important for nucleolar localization of TERT. Interacts with SMARCA4 (via the bromodomain); the interaction regulates Wnt-mediated signaling. Interacts with MCRS1 (isoform MCRS2); the interaction inhibits in vitro telomerase activity. Interacts with PIF1; the interaction has no effect on the elongation activity of TERT. Interacts with PML; the interaction recruits TERT to PML bodies and inhibits telomerase activity. Interacts with GNL3L. Interacts with isoform 1 and isoform 2 of NVL. Interacts with DHX36. Interacts with ATF7. In terms of processing, phosphorylation at Tyr-697 under oxidative stress leads to translocation of TERT to the cytoplasm and reduces its antiapoptotic activity. Dephosphorylated by SHP2/PTPN11 leading to nuclear retention. Phosphorylation at the G2/M phase at Ser-447 by DYRK2 promotes ubiquitination by the EDVP complex and degradation. Post-translationally, ubiquitinated by the EDVP complex, a E3 ligase complex following phosphorylation at Ser-447 by DYRK2. Ubiquitinated leads to proteasomal degradation. In terms of tissue distribution, isoform 1 and isoform 2 expressed in thymus, liver, spleen, lung, kidney and testis. High level of inactive isoform 3 in adult hippocampus, low level in heart, cortex and cerebellum.

It is found in the nucleus. The protein localises to the nucleolus. Its subcellular location is the nucleoplasm. It localises to the chromosome. The protein resides in the telomere. It is found in the cytoplasm. The protein localises to the PML body. It catalyses the reaction DNA(n) + a 2'-deoxyribonucleoside 5'-triphosphate = DNA(n+1) + diphosphate. Functionally, telomerase is a ribonucleoprotein enzyme essential for the replication of chromosome termini in most eukaryotes. Active in progenitor and cancer cells. Inactive, or very low activity, in normal somatic cells. Catalytic component of the teleromerase holoenzyme complex whose main activity is the elongation of telomeres by acting as a reverse transcriptase that adds simple sequence repeats to chromosome ends by copying a template sequence within the RNA component of the enzyme. Catalyzes the RNA-dependent extension of 3'-chromosomal termini with the 6-nucleotide telomeric repeat unit, 5'-TTAGGG-3'. The catalytic cycle involves primer binding, primer extension and release of product once the template boundary has been reached or nascent product translocation followed by further extension. More active on substrates containing 2 or 3 telomeric repeats. Telomerase activity is regulated by a number of factors including telomerase complex-associated proteins, chaperones and polypeptide modifiers. Modulates Wnt signaling. Plays important roles in aging and antiapoptosis. This chain is Telomerase reverse transcriptase, found in Rattus norvegicus (Rat).